The primary structure comprises 70 residues: Melittin (70 aa).

Positions 1-21 (MKFLVNVALVFMVVYISFIYA) are cleaved as a signal peptide. Positions 22–43 (APEPEPAPEAEAEADAEADPEA) are cleaved as a propeptide — removed by a dipeptidylpeptidase. G44 carries the N-formylglycine; partial modification. The residue at position 69 (Q69) is a Glutamine amide.

The protein belongs to the melittin family. In terms of assembly, monomer (in solution and for integration into membranes), homotetramer (in solution and potentially as a toroidal pore in membranes), and potenially homomultimer (as a toroidal pore in membranes). As to expression, expressed by the venom gland.

It localises to the secreted. The protein resides in the target cell membrane. Its function is as follows. Main toxin of bee venom with strong hemolytic activity and antimicrobial activity. It has enhancing effects on bee venom phospholipase A2 activity. This amphipathic toxin binds to negatively charged membrane surface and forms pore by inserting into lipid bilayers inducing the leakage of ions and molecules and the enhancement of permeability that ultimately leads to cell lysis. It acts as a voltage-gated pore with higher selectivity for anions over cations. The ion conductance has been shown to be voltage-dependent. Self-association of melittin in membranes is promoted by high ionic strength, but not by the presence of negatively charged lipids. In vivo, intradermal injection into healthy human volunteers produce sharp pain sensation and an inflammatory response. It produces pain by activating primary nociceptor cells directly and indirectly due to its ability to activate plasma membrane phospholipase A2 and its pore-forming activity. The protein is Melittin (MELT) of Polistes hebraeus (Paper wasp).